The chain runs to 398 residues: Cytochrome P450 165B3 (398 aa).

Cysteine 347 contacts heme.

The protein belongs to the cytochrome P450 family. Requires heme as cofactor.

Its pathway is antibiotic biosynthesis; vancomycin biosynthesis. In terms of biological role, involved in the coupling of aromatic side chains of the heptapeptide of vancomycin. In Amycolatopsis orientalis (Nocardia orientalis), this protein is Cytochrome P450 165B3 (cyp165B3).